The sequence spans 858 residues: Elongation factor 2 (858 aa).

In terms of domain architecture, tr-type G spans 17-362 (ANIRNMSVIA…MITIHLPSPV (346 aa)). 26 to 33 (AHVDHGKS) is a GTP binding site. T54 is modified (phosphothreonine). T57 carries the post-translational modification Phosphothreonine; by EEF2K. The residue at position 59 (T59) is a Phosphothreonine. K152 is subject to N6-succinyllysine. Residues 158–161 (NKMD) and 216–218 (SGL) contribute to the GTP site. Position 235 is an N6-acetyllysine (K235). An N6-acetyllysine; alternate modification is found at K239. A Glycyl lysine isopeptide (Lys-Gly) (interchain with G-Cter in SUMO1); alternate cross-link involves residue K239. Y265 bears the Phosphotyrosine; by CSK mark. K272 is modified (N6-acetyllysine; alternate). N6-succinyllysine; alternate is present on K272. The residue at position 275 (K275) is an N6-acetyllysine. A Glycyl lysine isopeptide (Lys-Gly) (interchain with G-Cter in SUMO) cross-link involves residue K322. S325 is subject to Phosphoserine. Y373 is subject to Phosphotyrosine; by CSK. T435 is modified (phosphothreonine). N6-acetyllysine is present on residues K439 and K445. Residue S502 is modified to Phosphoserine. K525 carries the N6,N6,N6-trimethyllysine; by EEF2KMT modification. Residue K529 forms a Glycyl lysine isopeptide (Lys-Gly) (interchain with G-Cter in SUMO) linkage. At K572 the chain carries N6-succinyllysine. S595 is modified (phosphoserine; by CDK2). K619 bears the N6-acetyllysine mark. H715 bears the Diphthamide mark.

This sequence belongs to the TRAFAC class translation factor GTPase superfamily. Classic translation factor GTPase family. EF-G/EF-2 subfamily. As to quaternary structure, binds to 80S ribosomes. Actively translating ribosomes show mutually exclusive binding of eIF5a (EIF5A or EIF5A2) and EEF2/eEF2. Interacts with SERBP1; interaction sequesters EEF2/eEF2 at the A-site of the ribosome, thereby blocking the interaction sites of the mRNA-tRNA complex, promoting ribosome stabilization and hibernation. Interacts with HABP4; interaction takes place at the A-site of hibernating ribosomes and promotes ribosome stabilization. Component of the mRNA surveillance SURF complex, at least composed of ERF1, ERF3 (ERF3A or ERF3B), EEF2, UPF1/RENT1, SMG1, SMG8 and SMG9. Interacts with RBPMS2. In terms of processing, phosphorylation by EF-2 kinase completely inactivates EF-2; it requires prior phosphorylation by CDK2 at Ser-595 during mitotic prometaphase. Phosphorylation by CSK promotes SUMOylation, proteolytic cleavage, and nuclear translocation if the C-terminal fragment. Diphthamide is 2-[3-carboxyamido-3-(trimethyl-ammonio)propyl]histidine. Post-translationally, ISGylated. In terms of processing, proteolytically processed at two sites following phosphorylation by CSK. SUMOylated following phosphorylation by CSK, promotes proteolytic cleavage.

The protein resides in the cytoplasm. Its subcellular location is the nucleus. It catalyses the reaction GTP + H2O = GDP + phosphate + H(+). Its function is as follows. Catalyzes the GTP-dependent ribosomal translocation step during translation elongation. During this step, the ribosome changes from the pre-translocational (PRE) to the post-translocational (POST) state as the newly formed A-site-bound peptidyl-tRNA and P-site-bound deacylated tRNA move to the P and E sites, respectively. Catalyzes the coordinated movement of the two tRNA molecules, the mRNA and conformational changes in the ribosome. The polypeptide is Elongation factor 2 (EEF2) (Bos taurus (Bovine)).